The sequence spans 462 residues: L-seryl-tRNA(Sec) selenium transferase (462 aa).

N6-(pyridoxal phosphate)lysine is present on Lys-292.

It belongs to the SelA family. Requires pyridoxal 5'-phosphate as cofactor.

Its subcellular location is the cytoplasm. The enzyme catalyses L-seryl-tRNA(Sec) + selenophosphate + H(+) = L-selenocysteinyl-tRNA(Sec) + phosphate. It functions in the pathway aminoacyl-tRNA biosynthesis; selenocysteinyl-tRNA(Sec) biosynthesis; selenocysteinyl-tRNA(Sec) from L-seryl-tRNA(Sec) (bacterial route): step 1/1. In terms of biological role, converts seryl-tRNA(Sec) to selenocysteinyl-tRNA(Sec) required for selenoprotein biosynthesis. This Clostridium perfringens (strain 13 / Type A) protein is L-seryl-tRNA(Sec) selenium transferase.